A 330-amino-acid polypeptide reads, in one-letter code: DNA-directed RNA polymerase I subunit RPA43 (330 aa).

The interval 251-330 is disordered; it reads ADVTDVTPQE…ANFESPKKRQ (80 aa). Residues S306, S318, and S325 each carry the phosphoserine modification. Basic and acidic residues predominate over residues 317-330; it reads HSEEANFESPKKRQ.

The protein belongs to the eukaryotic RPA43 RNA polymerase subunit family. In terms of assembly, component of the RNA polymerase I (Pol I) complex consisting of 13 subunits: a ten-subunit catalytic core composed of POLR1A/RPA1, POLR1B/RPA2, POLR1C/RPAC1, POLR1D/RPAC2, POLR1H/RPA12, POLR2E/RPABC1, POLR2F/RPABC2, POLR2H/RPABC3, POLR2K/RPABC4 and POLR2L/RPABC5; a mobile stalk subunit POLR1F/RPA43 protruding from the core and additional subunits homologous to general transcription factors POLR1E/RPA49 and POLR1G/RPA34. Interacts with RRN3/TIF-IA. Interacts with RRN3/TIF-IA. In terms of tissue distribution, widely expressed.

The protein resides in the nucleus. It is found in the nucleolus. Component of RNA polymerase I (Pol I), a DNA-dependent RNA polymerase which synthesizes ribosomal RNA precursors using the four ribonucleoside triphosphates as substrates. Through its association with RRN3/TIF-IA may be involved in recruitment of Pol I to rDNA promoters. This is DNA-directed RNA polymerase I subunit RPA43 from Mus musculus (Mouse).